Here is a 473-residue protein sequence, read N- to C-terminus: Cysteine--tRNA ligase (473 aa).

Residue Cys-29 participates in Zn(2+) binding. The 'HIGH' region motif lies at 31–41 (ATVQSAPHIGH). Cys-207, His-232, and Glu-236 together coordinate Zn(2+). The short motif at 263–267 (KMSKS) is the 'KMSKS' region element. Lys-266 contributes to the ATP binding site.

It belongs to the class-I aminoacyl-tRNA synthetase family. In terms of assembly, monomer. The cofactor is Zn(2+).

It is found in the cytoplasm. The enzyme catalyses tRNA(Cys) + L-cysteine + ATP = L-cysteinyl-tRNA(Cys) + AMP + diphosphate. This chain is Cysteine--tRNA ligase, found in Corynebacterium kroppenstedtii (strain DSM 44385 / JCM 11950 / CIP 105744 / CCUG 35717).